Consider the following 706-residue polypeptide: Cyclic nucleotide-gated channel alpha-3 (706 aa).

Residues 1-189 (MAKISTQYSH…MDPSSNMYYH (189 aa)) are Cytoplasmic-facing. Positions 113-177 (RESHVQFNVG…PKKEEKKKDS (65 aa)) are disordered. Positions 147 to 177 (SEKDDKAKKEEKEKKEEKKENPKKEEKKKDS) are enriched in basic and acidic residues. A helical membrane pass occupies residues 190–211 (WLTVIAVPVFYNWCLLVCRACF). The Extracellular segment spans residues 212-217 (DELQSE). A helical transmembrane segment spans residues 218–238 (HLMLWLVLDYSADILYGMDML). Over 239–265 (VRARTGFLEQGLMVMDASRLWKHYTQT) the chain is Cytoplasmic. The chain crosses the membrane as a helical span at residues 266-285 (LHFKLDVLSLVPTDLAYFKL). Over 286-289 (GMNY) the chain is Extracellular. A helical membrane pass occupies residues 290 to 307 (PELRFNRLLKLARLFEFF). Topologically, residues 308–317 (DRTETRTNYP) are cytoplasmic. Residues 317-425 (PNMFRIGNLV…GNVGSMISNM (109 aa)) are ion conduction pathway. A helical membrane pass occupies residues 318 to 340 (NMFRIGNLVLYILIIIHWNACIY). The Extracellular segment spans residues 341-366 (FAISKFIGFGTDSWVYPNVSNPEYGR). An N-linked (GalNAc...) asparagine glycan is attached at asparagine 358. Transmembrane regions (helical) follow at residues 367 to 397 (LSRK…DEEY) and 398 to 422 (LFVV…GSMI). A selectivity filter region spans residues 384-387 (TIGE). Residues 423–706 (SNMNASRAEF…DAPQTEASQP (284 aa)) lie on the Cytoplasmic side of the membrane. A C-linker region spans residues 427 to 504 (ASRAEFQAKI…TLRKVRIFQD (78 aa)). The tract at residues 507-627 (AGLLVELVLK…EEKGRQILMK (121 aa)) is cyclic nucleotide-binding domain. Glycine 567, glutamate 568, serine 570, arginine 583, threonine 584, and aspartate 628 together coordinate 3',5'-cyclic GMP. Residues 645–688 (IEEKVEHLETSLDSLQTRFARLLAEYNATQMKVKQRLSQLESQV) are a coiled coil. Residues 685–706 (ESQVKMGLPPDGDAPQTEASQP) are disordered.

It belongs to the cyclic nucleotide-gated cation channel (TC 1.A.1.5) family. CNGA3 subfamily. Forms heterotetrameric channels composed of CNGA3 and CNGB3 subunits with 3:1 stoichiometry. In terms of tissue distribution, testis, kidney, retinal cone (at protein level) and heart.

The protein localises to the cell membrane. The enzyme catalyses Ca(2+)(in) = Ca(2+)(out). The catalysed reaction is Na(+)(in) = Na(+)(out). It carries out the reaction K(+)(in) = K(+)(out). It catalyses the reaction NH4(+)(in) = NH4(+)(out). The enzyme catalyses Rb(+)(in) = Rb(+)(out). The catalysed reaction is Li(+)(in) = Li(+)(out). It carries out the reaction Cs(+)(in) = Cs(+)(out). Its activity is regulated as follows. Ca(2+) influx is inhibited by extracellular Mg(2+) ions. Functionally, pore-forming subunit of the cone cyclic nucleotide-gated channel. Mediates cone photoresponses at bright light converting transient changes in intracellular cGMP levels into electrical signals. In the dark, cGMP levels are high and keep the channel open enabling a steady inward current carried by Na(+) and Ca(2+) ions that leads to membrane depolarization and neurotransmitter release from synaptic terminals. Upon photon absorption cGMP levels decline leading to channel closure and membrane hyperpolarization that ultimately slows neurotransmitter release and signals the presence of light, the end point of the phototransduction cascade. Pore-forming subunit of the gustatory cyclic nucleotide-gated channel. In the taste buds, may sense oral extracellular pH and conduct ion currents that modulate the excitability of taste cells. Conducts cGMP- and cAMP-gated ion currents, with permeability for monovalent and divalent cations. This is Cyclic nucleotide-gated channel alpha-3 from Bos taurus (Bovine).